The chain runs to 448 residues: C4-dicarboxylate transport protein 2 (448 aa).

9 helical membrane passes run 13–33, 49–69, 81–101, 149–169, 193–213, 227–247, 294–314, 335–355, and 357–377; these read SLYV…HFSP, LIKM…IAGM, LALL…LIVV, AFAK…GFAL, IVGI…AFTI, LMGA…GIVS, VVGL…SIYL, ITLL…TGSG, and IVLA…LALI.

It belongs to the dicarboxylate/amino acid:cation symporter (DAACS) (TC 2.A.23) family.

It localises to the cell inner membrane. Responsible for the transport of dicarboxylates such as succinate, fumarate, and malate from the periplasm across the membrane. The sequence is that of C4-dicarboxylate transport protein 2 from Polaromonas naphthalenivorans (strain CJ2).